The following is a 64-amino-acid chain: Protein YnhH (64 aa).

The protein is Protein YnhH of Escherichia coli (strain K12).